Consider the following 1572-residue polypeptide: E3 ubiquitin-protein ligase HECW2 (1572 aa).

Position 48 is a phosphoserine (serine 48). In terms of domain architecture, C2 spans 167 to 301 (GAEGMEGGAS…QAIGDQMLSY (135 aa)). Disordered regions lie at residues 341 to 452 (VNSV…SSFP) and 489 to 796 (IMFS…PSVR). Residues 400–410 (TSTSSRTSPPR) are compositionally biased toward low complexity. Positions 518–532 (ASTHEAASFEDKPEN) are enriched in basic and acidic residues. Composition is skewed to polar residues over residues 572–588 (EVDQ…SDAS), 597–614 (ETES…SSET), 643–664 (SSCN…SSLE), and 688–703 (PTSS…SVCT). The interval 737-1068 (WQRRGSLEGA…PRPSSTFNTV (332 aa)) is interaction with TP73. A compositionally biased stretch (low complexity) spans 744 to 776 (EGAAAAAESPPQEEGSAGEAQGTCEGATAQEEG). The WW 1 domain occupies 807 to 840 (EALPPNWEARIDSHGRIFYVDHVNRTTTWQRPTA). Residues 847–874 (LQRSNSIQQMEQLNRRYQSIRRTMTNER) adopt a coiled-coil conformation. Serine 852 and serine 909 each carry phosphoserine. Residues 985–1018 (LELPRGWEMKHDHQGKAFFVDHNSRTTTFIDPRL) enclose the WW 2 domain. Disordered stretches follow at residues 1024-1069 (RPTS…NTVS) and 1161-1187 (CQSP…RAPA). Positions 1031–1040 (HRQHLTRQRS) are enriched in basic residues. Residues 1161-1181 (CQSPRGSPVSSPQNSPGTQRA) are compositionally biased toward polar residues. Position 1175 is a phosphoserine (serine 1175). The region spanning 1237–1572 (SRKDLQRNKL…VEETSTFGLE (336 aa)) is the HECT domain. Cysteine 1540 serves as the catalytic Glycyl thioester intermediate.

As to quaternary structure, interacts with TP73. Interacts with FZR1. Ubiquitinated and degraded during mitotic exit by APC/C-Cdh1. In terms of tissue distribution, predominantly expressed in adult brain, lung and heart.

The protein resides in the cytoplasm. Its subcellular location is the cytoskeleton. The protein localises to the spindle. It catalyses the reaction S-ubiquitinyl-[E2 ubiquitin-conjugating enzyme]-L-cysteine + [acceptor protein]-L-lysine = [E2 ubiquitin-conjugating enzyme]-L-cysteine + N(6)-ubiquitinyl-[acceptor protein]-L-lysine.. The protein operates within protein modification; protein ubiquitination. Functionally, E3 ubiquitin-protein ligase that mediates ubiquitination of TP73. Acts to stabilize TP73 and enhance activation of transcription by TP73. Involved in the regulation of mitotic metaphase/anaphase transition. This Homo sapiens (Human) protein is E3 ubiquitin-protein ligase HECW2 (HECW2).